The following is a 172-amino-acid chain: MLCPFCSYSDNRVLESRLAEEGESVRRRRECKQCRRRFTTYERIEFVPTVVIKRNGRREAFDRSKVLRGVMIACEKTDVPAELIEQLVDDLQAELQQRSSREVTSAEIGEMVLALLKPLNEVAYVRFASVYRKFKGVADFVSELQTFEANAELDSLKARLERLAAAHDQSAD.

A zinc finger lies at 3–34 (CPFCSYSDNRVLESRLAEEGESVRRRRECKQC). One can recognise an ATP-cone domain in the interval 49 to 139 (TVVIKRNGRR…VYRKFKGVAD (91 aa)).

Belongs to the NrdR family. It depends on Zn(2+) as a cofactor.

Its function is as follows. Negatively regulates transcription of bacterial ribonucleotide reductase nrd genes and operons by binding to NrdR-boxes. The protein is Transcriptional repressor NrdR of Gloeobacter violaceus (strain ATCC 29082 / PCC 7421).